A 181-amino-acid polypeptide reads, in one-letter code: Ribulose bisphosphate carboxylase small subunit, chloroplastic 6 (181 aa).

A chloroplast-targeting transit peptide spans 1-57; sequence MASSIVSSAAVATRSNVAQASMVAPFTGLKSAASFPVTKKNNNVDITSLASNGGRVR.

Belongs to the RuBisCO small chain family. In terms of assembly, heterohexadecamer of 8 large and 8 small subunits.

It localises to the plastid. The protein resides in the chloroplast. In terms of biological role, ruBisCO catalyzes two reactions: the carboxylation of D-ribulose 1,5-bisphosphate, the primary event in carbon dioxide fixation, as well as the oxidative fragmentation of the pentose substrate. Both reactions occur simultaneously and in competition at the same active site. Although the small subunit is not catalytic it is essential for maximal activity. The sequence is that of Ribulose bisphosphate carboxylase small subunit, chloroplastic 6 from Solanum tuberosum (Potato).